A 482-amino-acid polypeptide reads, in one-letter code: Transcription factor Sox-9 (482 aa).

Disordered regions lie at residues 1-66 (MNLL…ETED) and 160-274 (RLRI…FRDV). Residues 30-41 (SAGSPCPSGSGS) are compositionally biased toward low complexity. Over residues 42-52 (DTENTRPQENT) the composition is skewed to polar residues. Basic and acidic residues-rich tracts occupy residues 56-66 (GDPELKKETED) and 160-174 (RLRI…DYKY). K61 is covalently cross-linked (Glycyl lysine isopeptide (Lys-Gly) (interchain with G-Cter in SUMO)). The dimerization (DIM) stretch occupies residues 63–103 (ETEDEKFPVCIREAVSQVLKGYDWTLVPMPVRVNGSSKSKP). The PQA stretch occupies residues 63–103 (ETEDEKFPVCIREAVSQVLKGYDWTLVPMPVRVNGSSKSKP). Positions 105-173 (VKRPMNAFMV…QHKKDHPDYK (69 aa)) form a DNA-binding region, HMG box. Residues 211–220 (SPHSASSMSE) show a composition bias toward polar residues. Residues 224 to 308 (PGEHSGQSQG…LPPNGHPGVG (85 aa)) are transactivation domain (TAM). 2 short sequence motifs (9aaTAD) span residues 276–285 (IGELSSEVIS) and 291–299 (DVNEFDQYL). The tract at residues 295–395 (FDQYLPPNGH…HSPQQLNYSS (101 aa)) is disordered. Composition is skewed to polar residues over residues 308-326 (GSTQ…TPSA) and 351-366 (HSLS…SQQR). The tract at residues 366–482 (RTHIKTEQLS…QPVYTQLTRP (117 aa)) is transactivation domain (TAC). K370 participates in a covalent cross-link: Glycyl lysine isopeptide (Lys-Gly) (interchain with G-Cter in SUMO). Residues 375-390 (SPSHYSDQQQQHSPQQ) show a composition bias toward low complexity. Residues 433-441 (SGLYSNFSY) carry the 9aaTAD 3 motif. The segment at 448–482 (PMYTPIADTTGVPSIPQTHSPQHWEQPVYTQLTRP) is disordered. A compositionally biased stretch (polar residues) spans 458–482 (GVPSIPQTHSPQHWEQPVYTQLTRP).

In terms of assembly, interacts with the sumoylation factors ube2i/ubc9 and sumo1. In terms of processing, sumoylated. Lys-370 is the major site of sumoylation, although sumoylation at Lys-61 also occurs. Sumoylation plays a key role in regulating formation of the neural crest and otic placode. As to expression, expressed in both male and female gonads from after metamorphosis through to adult stages. In the testis, expression is restricted to the supporting Sertoli-like cells. Conversely in the ovary, expression is localized to primary oocytes (at protein level). In developing limbs, expressed before chrondrocytes form (stage 52 tadpoles) and throughout the cartilaginous anlagen until stage 56, after which expression ceases in the enlarged cells of the diaphysis. At later stages, expression continues in the chondrocytes of the epiphysis and metaphysis, and weak expression is seen in most of the diaphysis.

It localises to the nucleus. Its subcellular location is the cytoplasm. Its function is as follows. Transcription factor that plays a key role in chondrocytes differentiation and skeletal development. Specifically binds the 5'-ACAAAG-3' DNA motif present in enhancers and super-enhancers and promotes expression of genes important for chondrogenesis, including COL2A1. Plays a central role in successive steps of chondrocyte differentiation. Absolutely required for precartilaginous condensation, the first step in chondrogenesis during which skeletal progenitors differentiate into prechondrocytes. Together with SOX5 and SOX6, required for overt chondrogenesis when condensed prechondrocytes differentiate into early stage chondrocytes, the second step in chondrogenesis. Later, required to direct hypertrophic maturation and block osteoblast differentiation of growth plate chondrocytes: maintains chondrocyte columnar proliferation, delays prehypertrophy and then prevents osteoblastic differentiation of chondrocytes. Also required for chondrocyte hypertrophy, both indirectly, by keeping the lineage fate of chondrocytes, and directly, by remaining present in upper hypertrophic cells. Low lipid levels are the main nutritional determinant for chondrogenic commitment of skeletal progenitor cells: when lipids levels are low, FOXO transcription factors promote expression of SOX9, which induces chondrogenic commitment and suppresses fatty acid oxidation. In addition to cartilage development, also acts as a regulator of proliferation and differentiation in epithelial stem/progenitor cells. Unlikely to play a role in sex determination but may function during testicular and ovarian differentiation. This Xenopus tropicalis (Western clawed frog) protein is Transcription factor Sox-9.